The sequence spans 277 residues: PTS system sorbose-specific EIIC component (277 aa).

Helical transmembrane passes span 1 to 21 (MAIS…VGMG), 92 to 112 (IQKG…LTVL), 133 to 153 (FTAI…RVSI), 177 to 197 (VITG…YAMI), and 219 to 239 (YLKL…IVYV). Positions 3–237 (ISTIQIILIF…GAVGLIFAIV (235 aa)) constitute a PTS EIIC type-4 domain.

The protein localises to the cell membrane. Its function is as follows. The phosphoenolpyruvate-dependent sugar phosphotransferase system (PTS), a major carbohydrate active transport system, catalyzes the phosphorylation of incoming sugar substrates concomitant with their translocation across the cell membrane. The enzyme II SorABCD PTS system is involved in L-sorbose transport. The sequence is that of PTS system sorbose-specific EIIC component from Lacticaseibacillus casei (Lactobacillus casei).